The chain runs to 560 residues: 2-succinyl-5-enolpyruvyl-6-hydroxy-3-cyclohexene-1-carboxylate synthase (560 aa).

It belongs to the TPP enzyme family. MenD subfamily. As to quaternary structure, homodimer. It depends on Mg(2+) as a cofactor. Mn(2+) is required as a cofactor. The cofactor is thiamine diphosphate.

It catalyses the reaction isochorismate + 2-oxoglutarate + H(+) = 5-enolpyruvoyl-6-hydroxy-2-succinyl-cyclohex-3-ene-1-carboxylate + CO2. It functions in the pathway quinol/quinone metabolism; 1,4-dihydroxy-2-naphthoate biosynthesis; 1,4-dihydroxy-2-naphthoate from chorismate: step 2/7. Its pathway is quinol/quinone metabolism; menaquinone biosynthesis. Its function is as follows. Catalyzes the thiamine diphosphate-dependent decarboxylation of 2-oxoglutarate and the subsequent addition of the resulting succinic semialdehyde-thiamine pyrophosphate anion to isochorismate to yield 2-succinyl-5-enolpyruvyl-6-hydroxy-3-cyclohexene-1-carboxylate (SEPHCHC). In Pectobacterium carotovorum subsp. carotovorum (strain PC1), this protein is 2-succinyl-5-enolpyruvyl-6-hydroxy-3-cyclohexene-1-carboxylate synthase.